Consider the following 226-residue polypeptide: Phosphoribosylformylglycinamidine synthase subunit PurQ (226 aa).

One can recognise a Glutamine amidotransferase type-1 domain in the interval 2 to 225 (RFGIVVFPGS…MHYLEGGKNN (224 aa)). Cys-86 (nucleophile) is an active-site residue. Residues His-194 and Glu-196 contribute to the active site.

As to quaternary structure, part of the FGAM synthase complex composed of 1 PurL, 1 PurQ and 2 PurS subunits.

It is found in the cytoplasm. It catalyses the reaction N(2)-formyl-N(1)-(5-phospho-beta-D-ribosyl)glycinamide + L-glutamine + ATP + H2O = 2-formamido-N(1)-(5-O-phospho-beta-D-ribosyl)acetamidine + L-glutamate + ADP + phosphate + H(+). It carries out the reaction L-glutamine + H2O = L-glutamate + NH4(+). Its pathway is purine metabolism; IMP biosynthesis via de novo pathway; 5-amino-1-(5-phospho-D-ribosyl)imidazole from N(2)-formyl-N(1)-(5-phospho-D-ribosyl)glycinamide: step 1/2. In terms of biological role, part of the phosphoribosylformylglycinamidine synthase complex involved in the purines biosynthetic pathway. Catalyzes the ATP-dependent conversion of formylglycinamide ribonucleotide (FGAR) and glutamine to yield formylglycinamidine ribonucleotide (FGAM) and glutamate. The FGAM synthase complex is composed of three subunits. PurQ produces an ammonia molecule by converting glutamine to glutamate. PurL transfers the ammonia molecule to FGAR to form FGAM in an ATP-dependent manner. PurS interacts with PurQ and PurL and is thought to assist in the transfer of the ammonia molecule from PurQ to PurL. In Alkaliphilus metalliredigens (strain QYMF), this protein is Phosphoribosylformylglycinamidine synthase subunit PurQ.